The primary structure comprises 266 residues: MTAISDRFETLKQNQECALIPFITAGDPDLETTAAALKILDSNGADIIELGIPYSDPLADGPVIQAAATRALQNGTKLESVLEMLKVTTPSLQAPIVLFTYYNSILHRGIDNFLEQVAAAGVAGLVVPDLPLEEAAGLLKPATERGIDLILLIAPTSSSERIEAIARSSQGFIYLVSVTGVTGMRSQVEGRVLDLLQKVRQVTDKPLGVGFGISQPAQATQVRDWGADAAIVGSAFVQRLATGTPAEGLSAIAEFCQSLKAAIKTS.

Residues glutamate 49 and aspartate 60 each act as proton acceptor in the active site.

This sequence belongs to the TrpA family. Tetramer of two alpha and two beta chains.

The catalysed reaction is (1S,2R)-1-C-(indol-3-yl)glycerol 3-phosphate + L-serine = D-glyceraldehyde 3-phosphate + L-tryptophan + H2O. Its pathway is amino-acid biosynthesis; L-tryptophan biosynthesis; L-tryptophan from chorismate: step 5/5. In terms of biological role, the alpha subunit is responsible for the aldol cleavage of indoleglycerol phosphate to indole and glyceraldehyde 3-phosphate. The sequence is that of Tryptophan synthase alpha chain from Trichormus variabilis (strain ATCC 29413 / PCC 7937) (Anabaena variabilis).